The primary structure comprises 88 residues: Small ribosomal subunit protein uS17 (88 aa).

It belongs to the universal ribosomal protein uS17 family. In terms of assembly, part of the 30S ribosomal subunit.

One of the primary rRNA binding proteins, it binds specifically to the 5'-end of 16S ribosomal RNA. This Saccharophagus degradans (strain 2-40 / ATCC 43961 / DSM 17024) protein is Small ribosomal subunit protein uS17.